Consider the following 381-residue polypeptide: Putative F-box protein At4g17200 (381 aa).

Positions 1 to 47 constitute an F-box domain; that stretch reads MTTMSDLSPDLVGEILTRVPMTSLISVRCTCKMWNALSKEGIFFKAA.

The chain is Putative F-box protein At4g17200 from Arabidopsis thaliana (Mouse-ear cress).